The sequence spans 177 residues: NAD(P)H-quinone oxidoreductase subunit 6, chloroplastic (177 aa).

Transmembrane regions (helical) follow at residues 10-30 (IFLV…VLLT), 32-52 (PVYS…FHIP), 61-81 (AQLL…VMFM), 92-112 (LWTV…FSLI), and 152-172 (FYLP…GAIA).

It belongs to the complex I subunit 6 family. NDH is composed of at least 16 different subunits, 5 of which are encoded in the nucleus.

It is found in the plastid. Its subcellular location is the chloroplast thylakoid membrane. The enzyme catalyses a plastoquinone + NADH + (n+1) H(+)(in) = a plastoquinol + NAD(+) + n H(+)(out). It catalyses the reaction a plastoquinone + NADPH + (n+1) H(+)(in) = a plastoquinol + NADP(+) + n H(+)(out). Functionally, NDH shuttles electrons from NAD(P)H:plastoquinone, via FMN and iron-sulfur (Fe-S) centers, to quinones in the photosynthetic chain and possibly in a chloroplast respiratory chain. The immediate electron acceptor for the enzyme in this species is believed to be plastoquinone. Couples the redox reaction to proton translocation, and thus conserves the redox energy in a proton gradient. This is NAD(P)H-quinone oxidoreductase subunit 6, chloroplastic (ndhG) from Illicium oligandrum (Star anise).